We begin with the raw amino-acid sequence, 226 residues long: Gap junction beta-2 protein (226 aa).

The stretch at 2–13 is an intramembrane region; it reads DWGTLQTILGGV. Residues 14–20 are Cytoplasmic-facing; sequence NKHSTSI. Residues 21–40 traverse the membrane as a helical segment; the sequence is GKIWLTVLFIFRIMILVVAA. Topologically, residues 41–73 are extracellular; sequence KEVWGDEQADFVCNTLQPGCKNVCYDHYFPISH. E42, G45, and E47 together coordinate Ca(2+). 3 disulfide bridges follow: C53-C180, C60-C174, and C64-C169. A helical membrane pass occupies residues 74–94; that stretch reads IRLWALQLIFVSTPALLVAMH. Residues 95–135 lie on the Cytoplasmic side of the membrane; that stretch reads VAYRRHEKKRKFIKGEIKSEFKDIEEIKTQKVRIEGSLWWT. Residues 136-156 form a helical membrane-spanning segment; sequence YTSSIFFRVIFEAAFMYVFYV. Residues 157 to 189 lie on the Extracellular side of the membrane; sequence MYDGFSMQRLVKCNAWPCPNTVDCFVSRPTEKT. Residues 190 to 210 traverse the membrane as a helical segment; it reads VFTVFMIAVSGICILLNVTEL. The Cytoplasmic segment spans residues 211–226; sequence CYLLIRYCSGKSKKPV.

The protein belongs to the connexin family. Beta-type (group I) subfamily. In terms of assembly, a hemichannel or connexon is composed of a hexamer of connexins. A functional gap junction is formed by the apposition of two hemichannels. Forms heteromeric channels with GJB4. Interacts with CNST.

The protein resides in the cell membrane. It is found in the cell junction. Its subcellular location is the gap junction. Structural component of gap junctions. Gap junctions are dodecameric channels that connect the cytoplasm of adjoining cells. They are formed by the docking of two hexameric hemichannels, one from each cell membrane. Small molecules and ions diffuse from one cell to a neighboring cell via the central pore. This is Gap junction beta-2 protein (GJB2) from Gorilla gorilla gorilla (Western lowland gorilla).